The primary structure comprises 432 residues: 3-phosphoshikimate 1-carboxyvinyltransferase (432 aa).

Residues lysine 23, serine 24, and arginine 28 each contribute to the 3-phosphoshikimate site. Lysine 23 contributes to the phosphoenolpyruvate binding site. The phosphoenolpyruvate site is built by glycine 99 and arginine 127. 3-phosphoshikimate-binding residues include serine 172, serine 173, glutamine 174, serine 200, aspartate 317, asparagine 341, and lysine 345. Glutamine 174 is a binding site for phosphoenolpyruvate. Aspartate 317 acts as the Proton acceptor in catalysis. Phosphoenolpyruvate-binding residues include arginine 349, arginine 391, and lysine 416.

This sequence belongs to the EPSP synthase family. In terms of assembly, monomer.

It is found in the cytoplasm. The enzyme catalyses 3-phosphoshikimate + phosphoenolpyruvate = 5-O-(1-carboxyvinyl)-3-phosphoshikimate + phosphate. Its pathway is metabolic intermediate biosynthesis; chorismate biosynthesis; chorismate from D-erythrose 4-phosphate and phosphoenolpyruvate: step 6/7. Its function is as follows. Catalyzes the transfer of the enolpyruvyl moiety of phosphoenolpyruvate (PEP) to the 5-hydroxyl of shikimate-3-phosphate (S3P) to produce enolpyruvyl shikimate-3-phosphate and inorganic phosphate. This is 3-phosphoshikimate 1-carboxyvinyltransferase from Blochmanniella pennsylvanica (strain BPEN).